The sequence spans 31 residues: Cyclotide vico-B (31 aa).

A cross-link (cyclopeptide (Gly-Asn)) is located at residues 1–31; that stretch reads GSIPCAESCVYIPCITGIAGCSCKNKVCYYN. 3 cysteine pairs are disulfide-bonded: Cys-5/Cys-21, Cys-9/Cys-23, and Cys-14/Cys-28.

Belongs to the cyclotide family. Bracelet subfamily. Post-translationally, this is a cyclic peptide.

Functionally, probably participates in a plant defense mechanism. This Viola cotyledon (Violeta) protein is Cyclotide vico-B.